The primary structure comprises 213 residues: MEHEFWQKKWASNVIGFHLPDTNPILTQYWSALEPKRNETVFVPLCGKSMDLDWLAERHNSVTGVELSQIAVRAFFAERLYTPTVTQLSSTLELYEFDEFTIYSGDYFVAPIEAADLIYDRAALVALPKEMREEYVQVLRSRLKEGGRILLVTLDYDQNEMAGPPFSVPENEVQALFSGMKITRLQRDEADAEHPKIKKGLSRFAEEVWLIES.

Residues Trp-10, Leu-45, Glu-66, and Arg-121 each coordinate S-adenosyl-L-methionine.

The protein belongs to the class I-like SAM-binding methyltransferase superfamily. TPMT family.

The protein localises to the cytoplasm. It catalyses the reaction S-adenosyl-L-methionine + a thiopurine = S-adenosyl-L-homocysteine + a thiopurine S-methylether.. The sequence is that of Thiopurine S-methyltransferase from Aliivibrio fischeri (strain ATCC 700601 / ES114) (Vibrio fischeri).